We begin with the raw amino-acid sequence, 261 residues long: Imidazole glycerol phosphate synthase subunit HisF (261 aa).

Active-site residues include D16 and D135.

The protein belongs to the HisA/HisF family. In terms of assembly, heterodimer of HisH and HisF.

The protein localises to the cytoplasm. The catalysed reaction is 5-[(5-phospho-1-deoxy-D-ribulos-1-ylimino)methylamino]-1-(5-phospho-beta-D-ribosyl)imidazole-4-carboxamide + L-glutamine = D-erythro-1-(imidazol-4-yl)glycerol 3-phosphate + 5-amino-1-(5-phospho-beta-D-ribosyl)imidazole-4-carboxamide + L-glutamate + H(+). Its pathway is amino-acid biosynthesis; L-histidine biosynthesis; L-histidine from 5-phospho-alpha-D-ribose 1-diphosphate: step 5/9. IGPS catalyzes the conversion of PRFAR and glutamine to IGP, AICAR and glutamate. The HisF subunit catalyzes the cyclization activity that produces IGP and AICAR from PRFAR using the ammonia provided by the HisH subunit. The sequence is that of Imidazole glycerol phosphate synthase subunit HisF from Mycobacterium ulcerans (strain Agy99).